The chain runs to 207 residues: Protein ERP4 (207 aa).

An N-terminal signal peptide occupies residues 1–21 (MRVFTLIAILFSSSLLTHAFS). The Lumenal portion of the chain corresponds to 22–174 (SNYAPVGISL…TVSSTESRLT (153 aa)). The GOLD domain maps to 36-118 (KECLYYDLSS…PKKVEITLEK (83 aa)). Residues 175–195 (WLSLLIMGVMVGISIVQALII) form a helical membrane-spanning segment. The Cytoplasmic portion of the chain corresponds to 196–207 (QFFFTSRQKNYV).

It belongs to the EMP24/GP25L family.

The protein resides in the endoplasmic reticulum membrane. Involved in vesicular protein trafficking. This chain is Protein ERP4 (ERP4), found in Saccharomyces cerevisiae (strain ATCC 204508 / S288c) (Baker's yeast).